A 145-amino-acid chain; its full sequence is uncharacterized protein (145 aa).

Residues 1–41 adopt a coiled-coil conformation; sequence MEQHYHQQNQLRQLKQQQLKELLQQQSKDKEEDEQKHDDYR. A disordered region spans residues 1 to 91; sequence MEQHYHQQNQ…LQISEPEGES (91 aa). Positions 7–26 are enriched in low complexity; the sequence is QQNQLRQLKQQQLKELLQQQ. The segment covering 27–42 has biased composition (basic and acidic residues); sequence SKDKEEDEQKHDDYRS. The span at 43–58 shows a compositional bias: low complexity; it reads PTKTTTTTATSTSAAT.

This is an uncharacterized protein from Dictyostelium discoideum (Social amoeba).